The sequence spans 423 residues: Serine--tRNA ligase (423 aa).

230–232 (TAE) lines the L-serine pocket. ATP is bound at residue 261-263 (RSE). Glutamate 284 serves as a coordination point for L-serine. 348 to 351 (EISS) contacts ATP. Serine 384 contributes to the L-serine binding site.

Belongs to the class-II aminoacyl-tRNA synthetase family. Type-1 seryl-tRNA synthetase subfamily. In terms of assembly, homodimer. The tRNA molecule binds across the dimer.

Its subcellular location is the cytoplasm. The enzyme catalyses tRNA(Ser) + L-serine + ATP = L-seryl-tRNA(Ser) + AMP + diphosphate + H(+). It carries out the reaction tRNA(Sec) + L-serine + ATP = L-seryl-tRNA(Sec) + AMP + diphosphate + H(+). It functions in the pathway aminoacyl-tRNA biosynthesis; selenocysteinyl-tRNA(Sec) biosynthesis; L-seryl-tRNA(Sec) from L-serine and tRNA(Sec): step 1/1. Catalyzes the attachment of serine to tRNA(Ser). Is also able to aminoacylate tRNA(Sec) with serine, to form the misacylated tRNA L-seryl-tRNA(Sec), which will be further converted into selenocysteinyl-tRNA(Sec). In Syntrophobacter fumaroxidans (strain DSM 10017 / MPOB), this protein is Serine--tRNA ligase.